We begin with the raw amino-acid sequence, 529 residues long: Peptide chain release factor 3 (529 aa).

A tr-type G domain is found at 11–280; it reads AKRRTFAIIS…GLVEWAPAPM (270 aa). Residues 20–27, 88–92, and 142–145 each bind GTP; these read SHPDAGKT, DTPGH, and NKLD.

It belongs to the TRAFAC class translation factor GTPase superfamily. Classic translation factor GTPase family. PrfC subfamily.

Its subcellular location is the cytoplasm. In terms of biological role, increases the formation of ribosomal termination complexes and stimulates activities of RF-1 and RF-2. It binds guanine nucleotides and has strong preference for UGA stop codons. It may interact directly with the ribosome. The stimulation of RF-1 and RF-2 is significantly reduced by GTP and GDP, but not by GMP. This is Peptide chain release factor 3 from Shigella boydii serotype 18 (strain CDC 3083-94 / BS512).